Here is an 858-residue protein sequence, read N- to C-terminus: Leucine--tRNA ligase (858 aa).

The short motif at 42 to 52 (PYPSGNLHMGH) is the 'HIGH' region element. The segment covering 584–594 (NPNRSDSSRYI) has biased composition (polar residues). The interval 584 to 611 (NPNRSDSSRYIPSNLVDPNDPKDPETGE) is disordered. The 'KMSKS' region signature appears at 619 to 623 (TMSKS). Lysine 622 contacts ATP.

The protein belongs to the class-I aminoacyl-tRNA synthetase family.

Its subcellular location is the cytoplasm. It carries out the reaction tRNA(Leu) + L-leucine + ATP = L-leucyl-tRNA(Leu) + AMP + diphosphate. The chain is Leucine--tRNA ligase from Cyanothece sp. (strain PCC 7425 / ATCC 29141).